We begin with the raw amino-acid sequence, 279 residues long: Thymidylate synthase (279 aa).

133-134 (RR) lines the dUMP pocket. Cysteine 154 (nucleophile) is an active-site residue. Residues 178–181 (RSND), asparagine 189, and 219–221 (HIY) each bind dUMP. Aspartate 181 is a (6R)-5,10-methylene-5,6,7,8-tetrahydrofolate binding site. Residue alanine 278 participates in (6R)-5,10-methylene-5,6,7,8-tetrahydrofolate binding.

The protein belongs to the thymidylate synthase family. Bacterial-type ThyA subfamily. Homodimer.

It is found in the cytoplasm. It catalyses the reaction dUMP + (6R)-5,10-methylene-5,6,7,8-tetrahydrofolate = 7,8-dihydrofolate + dTMP. It participates in pyrimidine metabolism; dTTP biosynthesis. Functionally, catalyzes the reductive methylation of 2'-deoxyuridine-5'-monophosphate (dUMP) to 2'-deoxythymidine-5'-monophosphate (dTMP) while utilizing 5,10-methylenetetrahydrofolate (mTHF) as the methyl donor and reductant in the reaction, yielding dihydrofolate (DHF) as a by-product. This enzymatic reaction provides an intracellular de novo source of dTMP, an essential precursor for DNA biosynthesis. The polypeptide is Thymidylate synthase (Streptococcus pneumoniae (strain ATCC 700669 / Spain 23F-1)).